A 227-amino-acid polypeptide reads, in one-letter code: Cytochrome c oxidase subunit 2 (227 aa).

The Mitochondrial intermembrane portion of the chain corresponds to M1–S14. The helical transmembrane segment at P15 to M45 threads the bilayer. Over L46–Q59 the chain is Mitochondrial matrix. A helical membrane pass occupies residues E60–M87. The Mitochondrial intermembrane segment spans residues D88 to L227. H161, C196, E198, C200, H204, and M207 together coordinate Cu cation. Residue E198 coordinates Mg(2+).

It belongs to the cytochrome c oxidase subunit 2 family. As to quaternary structure, component of the cytochrome c oxidase (complex IV, CIV), a multisubunit enzyme composed of 14 subunits. The complex is composed of a catalytic core of 3 subunits MT-CO1, MT-CO2 and MT-CO3, encoded in the mitochondrial DNA, and 11 supernumerary subunits COX4I, COX5A, COX5B, COX6A, COX6B, COX6C, COX7A, COX7B, COX7C, COX8 and NDUFA4, which are encoded in the nuclear genome. The complex exists as a monomer or a dimer and forms supercomplexes (SCs) in the inner mitochondrial membrane with NADH-ubiquinone oxidoreductase (complex I, CI) and ubiquinol-cytochrome c oxidoreductase (cytochrome b-c1 complex, complex III, CIII), resulting in different assemblies (supercomplex SCI(1)III(2)IV(1) and megacomplex MCI(2)III(2)IV(2)). Found in a complex with TMEM177, COA6, COX18, COX20, SCO1 and SCO2. Interacts with TMEM177 in a COX20-dependent manner. Interacts with COX20. Interacts with COX16. The cofactor is Cu cation.

The protein resides in the mitochondrion inner membrane. The catalysed reaction is 4 Fe(II)-[cytochrome c] + O2 + 8 H(+)(in) = 4 Fe(III)-[cytochrome c] + 2 H2O + 4 H(+)(out). Functionally, component of the cytochrome c oxidase, the last enzyme in the mitochondrial electron transport chain which drives oxidative phosphorylation. The respiratory chain contains 3 multisubunit complexes succinate dehydrogenase (complex II, CII), ubiquinol-cytochrome c oxidoreductase (cytochrome b-c1 complex, complex III, CIII) and cytochrome c oxidase (complex IV, CIV), that cooperate to transfer electrons derived from NADH and succinate to molecular oxygen, creating an electrochemical gradient over the inner membrane that drives transmembrane transport and the ATP synthase. Cytochrome c oxidase is the component of the respiratory chain that catalyzes the reduction of oxygen to water. Electrons originating from reduced cytochrome c in the intermembrane space (IMS) are transferred via the dinuclear copper A center (CU(A)) of subunit 2 and heme A of subunit 1 to the active site in subunit 1, a binuclear center (BNC) formed by heme A3 and copper B (CU(B)). The BNC reduces molecular oxygen to 2 water molecules using 4 electrons from cytochrome c in the IMS and 4 protons from the mitochondrial matrix. This is Cytochrome c oxidase subunit 2 (MT-CO2) from Balaenoptera musculus (Blue whale).